The chain runs to 497 residues: Glutamate--tRNA ligase (497 aa).

Positions 13–23 (PSPTGTPHVGM) match the 'HIGH' region motif. The short motif at 257 to 261 (KLSKR) is the 'KMSKS' region element. Residue lysine 260 participates in ATP binding.

It belongs to the class-I aminoacyl-tRNA synthetase family. Glutamate--tRNA ligase type 1 subfamily. In terms of assembly, monomer.

Its subcellular location is the cytoplasm. The catalysed reaction is tRNA(Glu) + L-glutamate + ATP = L-glutamyl-tRNA(Glu) + AMP + diphosphate. Catalyzes the attachment of glutamate to tRNA(Glu) in a two-step reaction: glutamate is first activated by ATP to form Glu-AMP and then transferred to the acceptor end of tRNA(Glu). The polypeptide is Glutamate--tRNA ligase (Corynebacterium diphtheriae (strain ATCC 700971 / NCTC 13129 / Biotype gravis)).